The chain runs to 279 residues: Movement protein (279 aa).

A disordered region spans residues 246 to 279 (SESEDLNVESPPAAIGSSSASRSEAFRPQVVNGL). Residues 254 to 268 (ESPPAAIGSSSASRS) show a composition bias toward low complexity.

This sequence belongs to the cucumovirus movement protein family.

Its subcellular location is the host cell junction. The protein resides in the host plasmodesma. Functionally, transports viral genome to neighboring plant cells directly through plasmosdesmata, without any budding. The movement protein allows efficient cell to cell propagation, by bypassing the host cell wall barrier. Acts by forming a tubular structure at the host plasmodesmata, enlarging it enough to allow free passage of virion capsids. This chain is Movement protein, found in Cucurbita pepo (Vegetable marrow).